A 308-amino-acid chain; its full sequence is PHO85 cyclin-2 (308 aa).

The Cyclin N-terminal domain maps to 18–146 (EMVQYLASTT…LLEYFDWDVT (129 aa)). Positions 248 to 270 (SPRTYNIDSKHDNKENRPIPTIK) are disordered. The span at 255-264 (DSKHDNKENR) shows a compositional bias: basic and acidic residues.

The protein belongs to the cyclin family. PCL1,2 subfamily. In terms of assembly, forms a cyclin-CDK complex with PHO85. Interacts with RVS167.

It localises to the cytoplasm. The protein localises to the nucleus. Its function is as follows. G1/S-specific cyclin partner of the cyclin-dependent kinase (CDK) PHO85. Essential for the control of the cell cycle at the G1/S (start) transition. Together with cyclin PCL1, positively controls degradation of sphingoid long chain base kinase LCB4. The PCL2-PHO85 cyclin-CDK holoenzyme phosphorylates LCB4, which is required for its ubiquitination and degradation. PCL2-PHO85 also phosphorylates RVS167, linking cyclin-CDK activity with organization of the actin cytoskeleton. This chain is PHO85 cyclin-2 (PCL2), found in Saccharomyces cerevisiae (strain ATCC 204508 / S288c) (Baker's yeast).